Consider the following 568-residue polypeptide: Urocanate hydratase (568 aa).

Residues 58 to 59 (GG), Gln136, 182 to 184 (GMG), Glu202, Arg207, 248 to 249 (NA), 269 to 273 (QTSAH), 279 to 280 (YL), and Tyr328 each bind NAD(+). Residue Cys416 is part of the active site. Gly498 is an NAD(+) binding site.

The protein belongs to the urocanase family. Requires NAD(+) as cofactor.

It is found in the cytoplasm. The enzyme catalyses 4-imidazolone-5-propanoate = trans-urocanate + H2O. Its pathway is amino-acid degradation; L-histidine degradation into L-glutamate; N-formimidoyl-L-glutamate from L-histidine: step 2/3. Its function is as follows. Catalyzes the conversion of urocanate to 4-imidazolone-5-propionate. The polypeptide is Urocanate hydratase (Photobacterium profundum (strain SS9)).